The primary structure comprises 403 residues: MATTAGLRDAAAPLEKIPLETYVPPAKPSLIGLSRAELAARLGDIGVPERQQKMRVQQLWHWLYFRGARSFDEMTSVSKDTRNGLAERFTVDRPEVVAEQISNDGTRKWLLRLPSGDDLQKAHEVECVYIPETDRGTLCVSSQVGCTLNCAFCHTGTQRLVRNLTAGEIVGQIMVARDRLNDWADRETPHGNRLITNIVMMGMGEPLYNFEAVRDALLIVSDNEGIGISRRRITLSTSGVVPNIKRAGEEIGVMLAISLHAVRDELRNELVPLNRKYPIAELLQACRDYPGASNARRITFEYVMLKGVNDSLDDARLLVKLLKGIPAKINLIPFNPWPGSAYECSDWEQIEKFSEYVFNAGYSSPVRTPRGRDILAACGQLKSETEKLSARERQALRAMAMTD.

E126 (proton acceptor) is an active-site residue. The region spanning 132 to 375 (ETDRGTLCVS…VRTPRGRDIL (244 aa)) is the Radical SAM core domain. C139 and C378 form a disulfide bridge. Residues C146, C150, and C153 each coordinate [4Fe-4S] cluster. S-adenosyl-L-methionine contacts are provided by residues 204-205 (GE), S236, 258-260 (SLH), and N335. C378 (S-methylcysteine intermediate) is an active-site residue.

It belongs to the radical SAM superfamily. RlmN family. Requires [4Fe-4S] cluster as cofactor.

The protein localises to the cytoplasm. It carries out the reaction adenosine(2503) in 23S rRNA + 2 reduced [2Fe-2S]-[ferredoxin] + 2 S-adenosyl-L-methionine = 2-methyladenosine(2503) in 23S rRNA + 5'-deoxyadenosine + L-methionine + 2 oxidized [2Fe-2S]-[ferredoxin] + S-adenosyl-L-homocysteine. The enzyme catalyses adenosine(37) in tRNA + 2 reduced [2Fe-2S]-[ferredoxin] + 2 S-adenosyl-L-methionine = 2-methyladenosine(37) in tRNA + 5'-deoxyadenosine + L-methionine + 2 oxidized [2Fe-2S]-[ferredoxin] + S-adenosyl-L-homocysteine. In terms of biological role, specifically methylates position 2 of adenine 2503 in 23S rRNA and position 2 of adenine 37 in tRNAs. m2A2503 modification seems to play a crucial role in the proofreading step occurring at the peptidyl transferase center and thus would serve to optimize ribosomal fidelity. This is Dual-specificity RNA methyltransferase RlmN from Bradyrhizobium sp. (strain ORS 278).